The chain runs to 432 residues: Cyclic 2,3-diphosphoglycerate synthetase (432 aa).

The protein belongs to the cyclic 2,3-diphosphoglycerate synthetase family.

It is found in the cytoplasm. It catalyses the reaction (2R)-2,3-bisphosphoglycerate + ATP + H(+) = cyclic (2R)-2,3-bisphosphoglycerate + ADP + phosphate. In terms of biological role, catalyzes the formation of cyclic 2,3-diphosphoglycerate (cDPG) by formation of an intramolecular phosphoanhydride bond at the expense of ATP. In Thermococcus kodakarensis (strain ATCC BAA-918 / JCM 12380 / KOD1) (Pyrococcus kodakaraensis (strain KOD1)), this protein is Cyclic 2,3-diphosphoglycerate synthetase.